Consider the following 890-residue polypeptide: Translation initiation factor IF-2 (890 aa).

Positions 45-304 are disordered; sequence LIDHLNQKNS…LQQGFQKPAQ (260 aa). Over residues 67–81 the composition is skewed to polar residues; sequence STLNIPGTGGKSKSV. Residues 92–217 are compositionally biased toward basic and acidic residues; the sequence is VKRDPQEAER…RMAEENKWTD (126 aa). The segment covering 252 to 266 has biased composition (basic residues); that stretch reads GRGRNAKAARPKKGN. Residues 267–280 are compositionally biased toward basic and acidic residues; sequence KHAESKADREEARA. Residues 389-558 enclose the tr-type G domain; that stretch reads PRAPVVTIMG…LLQAEVLELK (170 aa). A G1 region spans residues 398-405; that stretch reads GHVDHGKT. A GTP-binding site is contributed by 398–405; sequence GHVDHGKT. Residues 423 to 427 form a G2 region; that stretch reads GITQH. Residues 444–447 form a G3 region; it reads DTPG. Residues 444-448 and 498-501 each bind GTP; these read DTPGH and NKID. A G4 region spans residues 498 to 501; the sequence is NKID. The segment at 534–536 is G5; it reads SAK. Lys808 is modified (N6-acetyllysine).

This sequence belongs to the TRAFAC class translation factor GTPase superfamily. Classic translation factor GTPase family. IF-2 subfamily.

The protein localises to the cytoplasm. Its function is as follows. One of the essential components for the initiation of protein synthesis. Protects formylmethionyl-tRNA from spontaneous hydrolysis and promotes its binding to the 30S ribosomal subunits. Also involved in the hydrolysis of GTP during the formation of the 70S ribosomal complex. This chain is Translation initiation factor IF-2, found in Escherichia coli O127:H6 (strain E2348/69 / EPEC).